A 468-amino-acid polypeptide reads, in one-letter code: MKLPEKLGPIHFIGIGGIGMSGIAEVMANLGYTVQGSDANDNANVRRLAENGIRTFVGHRAENVENAALVVVSTAIRRDNPELIEARERRLPVVRRAEMLAELMRFKSCVAVAGTHGKTTTTSLVATLLDAGNLDPTVINGGIINAYGTNARMGAGDWMVVEADESDGTFLKLPADVAIVTNIDPEHLDHFGSFEAIKDAFRRFIDNIPFYGFAVMCIDHPIVQDLVGHIEDRRIITYGENPQADVRLIDIDLKGGQSRFRVMIRDRRPGFRMEIEDLVLPMPGRHNALNATAALAVAHELGVPSDAIRKALAGFGGVKRRFTRTGEWNGATIFDDYGHHPVEIQAVLRAARASTDGRVIAIVQPHRYTRLQSLFEDFCTCFNDADTVIVAPVYAAGEAPIEGIDRDSLIAGLKARGHRDAVALERPEDLARLVAGRAGSNDYVVCLGAGTITQWAYALPGELAALQG.

Position 114–120 (114–120 (GTHGKTT)) interacts with ATP.

This sequence belongs to the MurCDEF family.

It is found in the cytoplasm. It catalyses the reaction UDP-N-acetyl-alpha-D-muramate + L-alanine + ATP = UDP-N-acetyl-alpha-D-muramoyl-L-alanine + ADP + phosphate + H(+). Its pathway is cell wall biogenesis; peptidoglycan biosynthesis. Functionally, cell wall formation. The sequence is that of UDP-N-acetylmuramate--L-alanine ligase from Methylorubrum extorquens (strain PA1) (Methylobacterium extorquens).